Reading from the N-terminus, the 143-residue chain is Small ribosomal subunit protein uS12 (143 aa).

Basic residues predominate over residues 1 to 19; the sequence is MGKPRGLRTARKHVNHRRD. The interval 1 to 23 is disordered; that stretch reads MGKPRGLRTARKHVNHRRDQRWA. The residue at position 62 (P62) is a 3-hydroxyproline.

It belongs to the universal ribosomal protein uS12 family. In terms of assembly, component of the 40S small ribosomal subunit. Post-translationally, hydroxylation at Pro-62 affects translation termination efficiency.

The protein localises to the cytoplasm. The protein resides in the cytosol. It is found in the rough endoplasmic reticulum. The chain is Small ribosomal subunit protein uS12 (RpS23) from Drosophila melanogaster (Fruit fly).